Consider the following 335-residue polypeptide: N-acetyl-gamma-glutamyl-phosphate reductase (335 aa).

The active site involves Cys156.

The protein belongs to the NAGSA dehydrogenase family. Type 1 subfamily.

It is found in the cytoplasm. The enzyme catalyses N-acetyl-L-glutamate 5-semialdehyde + phosphate + NADP(+) = N-acetyl-L-glutamyl 5-phosphate + NADPH + H(+). It participates in amino-acid biosynthesis; L-arginine biosynthesis; N(2)-acetyl-L-ornithine from L-glutamate: step 3/4. Catalyzes the NADPH-dependent reduction of N-acetyl-5-glutamyl phosphate to yield N-acetyl-L-glutamate 5-semialdehyde. The sequence is that of N-acetyl-gamma-glutamyl-phosphate reductase from Tolumonas auensis (strain DSM 9187 / NBRC 110442 / TA 4).